The primary structure comprises 328 residues: Fe(3+) ions import ATP-binding protein FbpC 1 (328 aa).

The 231-residue stretch at 7 to 237 (LVLKNITKAF…PNSLFLANFM (231 aa)) folds into the ABC transporter domain. 39–46 (GPSGCGKT) is an ATP binding site.

Belongs to the ABC transporter superfamily. Fe(3+) ion importer (TC 3.A.1.10) family. In terms of assembly, the complex is composed of two ATP-binding proteins (FbpC), two transmembrane proteins (FbpB) and a solute-binding protein (FbpA).

It localises to the cell inner membrane. It catalyses the reaction Fe(3+)(out) + ATP + H2O = Fe(3+)(in) + ADP + phosphate + H(+). Its function is as follows. Part of the ABC transporter complex FbpABC involved in Fe(3+) ions import. Responsible for energy coupling to the transport system. This Haemophilus influenzae (strain ATCC 51907 / DSM 11121 / KW20 / Rd) protein is Fe(3+) ions import ATP-binding protein FbpC 1.